Reading from the N-terminus, the 260-residue chain is Triosephosphate isomerase (260 aa).

N11–K13 contacts substrate. The active-site Electrophile is the H103. E175 acts as the Proton acceptor in catalysis. Residues G181, S220, and G241–G242 contribute to the substrate site.

The protein belongs to the triosephosphate isomerase family. As to quaternary structure, homodimer.

Its subcellular location is the cytoplasm. The catalysed reaction is D-glyceraldehyde 3-phosphate = dihydroxyacetone phosphate. It participates in carbohydrate biosynthesis; gluconeogenesis. It functions in the pathway carbohydrate degradation; glycolysis; D-glyceraldehyde 3-phosphate from glycerone phosphate: step 1/1. Its function is as follows. Involved in the gluconeogenesis. Catalyzes stereospecifically the conversion of dihydroxyacetone phosphate (DHAP) to D-glyceraldehyde-3-phosphate (G3P). The polypeptide is Triosephosphate isomerase (Shewanella sp. (strain MR-7)).